The chain runs to 104 residues: Small ribosomal subunit protein uS10 (104 aa).

The protein belongs to the universal ribosomal protein uS10 family. As to quaternary structure, part of the 30S ribosomal subunit.

Functionally, involved in the binding of tRNA to the ribosomes. The protein is Small ribosomal subunit protein uS10 of Ruegeria pomeroyi (strain ATCC 700808 / DSM 15171 / DSS-3) (Silicibacter pomeroyi).